The following is a 218-amino-acid chain: Dehydration-responsive element-binding protein 1B (218 aa).

Residues 1–26 are disordered; sequence MEVEEAAYRTVWSEPPKRPAGRTKFR. The segment at residues 32-95 is a DNA-binding region (AP2/ERF); the sequence is VYRGVRRRGG…RGRAACLNFA (64 aa). Positions 131 to 151 are disordered; the sequence is SAAPSSPAETFANDGDEEEDN.

It belongs to the AP2/ERF transcription factor family. ERF subfamily.

It localises to the nucleus. Its function is as follows. Transcriptional activator that binds specifically to the DNA sequence 5'-[AG]CCGAC-3'. Binding to the C-repeat/DRE element mediates high salinity- and dehydration-inducible transcription. Confers resistance to high salt, cold and drought stress. The sequence is that of Dehydration-responsive element-binding protein 1B (DREB1B) from Oryza sativa subsp. japonica (Rice).